Here is a 310-residue protein sequence, read N- to C-terminus: N-acetyl-gamma-glutamyl-phosphate reductase (310 aa).

Cys-117 is a catalytic residue.

This sequence belongs to the NAGSA dehydrogenase family. Type 2 subfamily.

The protein localises to the cytoplasm. It catalyses the reaction N-acetyl-L-glutamate 5-semialdehyde + phosphate + NADP(+) = N-acetyl-L-glutamyl 5-phosphate + NADPH + H(+). Its pathway is amino-acid biosynthesis; L-arginine biosynthesis; N(2)-acetyl-L-ornithine from L-glutamate: step 3/4. Functionally, catalyzes the NADPH-dependent reduction of N-acetyl-5-glutamyl phosphate to yield N-acetyl-L-glutamate 5-semialdehyde. The sequence is that of N-acetyl-gamma-glutamyl-phosphate reductase from Rhizobium etli (strain CIAT 652).